A 118-amino-acid polypeptide reads, in one-letter code: Large ribosomal subunit protein bL20 (118 aa).

The protein belongs to the bacterial ribosomal protein bL20 family.

Functionally, binds directly to 23S ribosomal RNA and is necessary for the in vitro assembly process of the 50S ribosomal subunit. It is not involved in the protein synthesizing functions of that subunit. In Pseudomonas aeruginosa (strain LESB58), this protein is Large ribosomal subunit protein bL20.